Reading from the N-terminus, the 78-residue chain is Defensin beta 136 (78 aa).

A signal peptide spans methionine 1–glycine 21. Disulfide bonds link cysteine 33/cysteine 60, cysteine 40/cysteine 54, and cysteine 44/cysteine 61.

This sequence belongs to the beta-defensin family.

It is found in the secreted. Host defense peptide that exhibits antimicrobial and antifungal activity. Exhibits antimicrobial activity against E.coli, S.aureus and C.albicans (in vitro). Has high lipopolysaccharide (LPS)-binding affinity, and may thereby be involved in immunoregulation through LPS neutralization. The polypeptide is Defensin beta 136 (DEFB136) (Pan troglodytes (Chimpanzee)).